Here is a 503-residue protein sequence, read N- to C-terminus: Cytochrome P450 3A15 (503 aa).

C442 is a binding site for heme.

This sequence belongs to the cytochrome P450 family. It depends on heme as a cofactor.

Its subcellular location is the endoplasmic reticulum membrane. It localises to the microsome membrane. The catalysed reaction is an organic molecule + reduced [NADPH--hemoprotein reductase] + O2 = an alcohol + oxidized [NADPH--hemoprotein reductase] + H2O + H(+). Its function is as follows. Cytochromes P450 are a group of heme-thiolate monooxygenases. In liver microsomes, this enzyme is involved in an NADPH-dependent electron transport pathway. It oxidizes a variety of structurally unrelated compounds, including steroids, fatty acids, and xenobiotics. This is Cytochrome P450 3A15 (CYP3A15) from Cavia porcellus (Guinea pig).